The sequence spans 235 residues: Superoxide dismutase [Mn] 3.1, mitochondrial (235 aa).

The transit peptide at 1–31 directs the protein to the mitochondrion; it reads MALRTLASKKVLSFPFGGAGRPLAAAASARG. Residues histidine 59, histidine 107, aspartate 196, and histidine 200 each contribute to the Mn(2+) site.

This sequence belongs to the iron/manganese superoxide dismutase family. As to quaternary structure, homotetramer. Requires Mn(2+) as cofactor.

It localises to the mitochondrion matrix. The enzyme catalyses 2 superoxide + 2 H(+) = H2O2 + O2. Its function is as follows. Destroys superoxide anion radicals which are normally produced within the cells and which are toxic to biological systems. This is Superoxide dismutase [Mn] 3.1, mitochondrial (SODA.4) from Zea mays (Maize).